Reading from the N-terminus, the 102-residue chain is ATP-dependent Clp protease adapter protein ClpS (102 aa).

Basic and acidic residues predominate over residues 1–18 (MSQFDHQHLSDTEEKQEL). The tract at residues 1-21 (MSQFDHQHLSDTEEKQELKPP) is disordered.

It belongs to the ClpS family. Binds to the N-terminal domain of the chaperone ClpA.

In terms of biological role, involved in the modulation of the specificity of the ClpAP-mediated ATP-dependent protein degradation. The chain is ATP-dependent Clp protease adapter protein ClpS from Idiomarina loihiensis (strain ATCC BAA-735 / DSM 15497 / L2-TR).